Here is a 94-residue protein sequence, read N- to C-terminus: MLELNLQLFAHKKGGGSTSNGRDSQAKRLGAKASDGELVSGGSILFRQRGTHIHPGTNVGRGGDHTLFAKIEGTVKFEMKRGKKHVSVYPVVAK.

Positions 1 to 9 are excised as a propeptide; it reads MLELNLQLF. Positions 12 to 33 are disordered; that stretch reads KKGGGSTSNGRDSQAKRLGAKA.

The protein belongs to the bacterial ribosomal protein bL27 family. In terms of processing, the N-terminus is cleaved by ribosomal processing cysteine protease Prp.

The protein is Large ribosomal subunit protein bL27 of Lactococcus lactis subsp. lactis (strain IL1403) (Streptococcus lactis).